The chain runs to 107 residues: ATP-dependent Clp protease adapter protein ClpS (107 aa).

Residues 1–20 form a disordered region; the sequence is MAQKHEHDTSVITESAPKQK.

It belongs to the ClpS family. As to quaternary structure, binds to the N-terminal domain of the chaperone ClpA.

In terms of biological role, involved in the modulation of the specificity of the ClpAP-mediated ATP-dependent protein degradation. The chain is ATP-dependent Clp protease adapter protein ClpS from Myxococcus xanthus (strain DK1622).